The primary structure comprises 342 residues: GTPase Obg (342 aa).

In terms of domain architecture, Obg spans 1-159 (MQFIDQAQIE…KLLRLELKLL (159 aa)). The OBG-type G domain maps to 160–330 (AEVGIIGLPN…MLQEVWGILD (171 aa)). GTP contacts are provided by residues 166–173 (GLPNAGKS), 191–195 (FTTLI), 213–216 (DIPG), 280–283 (NKID), and 311–313 (SAV). Residues Ser-173 and Thr-193 each contribute to the Mg(2+) site.

Belongs to the TRAFAC class OBG-HflX-like GTPase superfamily. OBG GTPase family. Monomer. Requires Mg(2+) as cofactor.

The protein resides in the cytoplasm. An essential GTPase which binds GTP, GDP and possibly (p)ppGpp with moderate affinity, with high nucleotide exchange rates and a fairly low GTP hydrolysis rate. Plays a role in control of the cell cycle, stress response, ribosome biogenesis and in those bacteria that undergo differentiation, in morphogenesis control. This Nostoc sp. (strain PCC 7120 / SAG 25.82 / UTEX 2576) protein is GTPase Obg.